Reading from the N-terminus, the 154-residue chain is Large ribosomal subunit protein uL13 (154 aa).

The protein belongs to the universal ribosomal protein uL13 family. In terms of assembly, part of the 50S ribosomal subunit.

Functionally, this protein is one of the early assembly proteins of the 50S ribosomal subunit, although it is not seen to bind rRNA by itself. It is important during the early stages of 50S assembly. The polypeptide is Large ribosomal subunit protein uL13 (Bartonella quintana (strain Toulouse) (Rochalimaea quintana)).